The following is a 78-amino-acid chain: ATP synthase subunit c (78 aa).

2 helical membrane passes run 11-31 and 53-73; these read FIGAGLAAIGSGAAAIGVGHV and LFIGIAFAEALGIFAFLVALL.

The protein belongs to the ATPase C chain family. As to quaternary structure, F-type ATPases have 2 components, F(1) - the catalytic core - and F(0) - the membrane proton channel. F(1) has five subunits: alpha(3), beta(3), gamma(1), delta(1), epsilon(1). F(0) has four main subunits: a(1), b(1), b'(1) and c(10-14). The alpha and beta chains form an alternating ring which encloses part of the gamma chain. F(1) is attached to F(0) by a central stalk formed by the gamma and epsilon chains, while a peripheral stalk is formed by the delta, b and b' chains.

Its subcellular location is the cell inner membrane. In terms of biological role, f(1)F(0) ATP synthase produces ATP from ADP in the presence of a proton or sodium gradient. F-type ATPases consist of two structural domains, F(1) containing the extramembraneous catalytic core and F(0) containing the membrane proton channel, linked together by a central stalk and a peripheral stalk. During catalysis, ATP synthesis in the catalytic domain of F(1) is coupled via a rotary mechanism of the central stalk subunits to proton translocation. Functionally, key component of the F(0) channel; it plays a direct role in translocation across the membrane. A homomeric c-ring of between 10-14 subunits forms the central stalk rotor element with the F(1) delta and epsilon subunits. The protein is ATP synthase subunit c of Jannaschia sp. (strain CCS1).